The following is a 302-amino-acid chain: Single-stranded DNA-binding protein (302 aa).

An LAST region spans residues 3-7; that stretch reads KRKST. Positions 65, 78, 88, and 91 each coordinate Zn(2+). Residues 273–302 form a disordered region; that stretch reads TKTEDDFMSSSSGSSSSADDTDLDDLLNDL. Residues 280–290 are compositionally biased toward low complexity; that stretch reads MSSSSGSSSSA. Over residues 291–302 the composition is skewed to acidic residues; sequence DDTDLDDLLNDL.

The protein belongs to the Tequatrovirus single-stranded DNA-binding protein family. In terms of assembly, homodimer in the absence of DNA, monomer when binding DNA. Interacts with the DNA helicase assembly protein; a ternary complex between the helicase assembly protein, the single-stranded DNA-binding protein and ssDNA is an obligatory intermediate in the helicase loading mechanism. Part of the replicase complex that includes the DNA polymerase, the polymerase clamp, the clamp loader complex, the single-stranded DNA binding protein, the primase, the DnaB-like SF4 replicative helicase and the helicase assembly factor. Interacts (via C-terminus) with the viral SF1 dDA helicase. Interacts with the viral SF2 UvsW repair helicase.

In terms of biological role, single-stranded DNA-binding protein that participates in viral DNA replication, recombination, and repair. Coats the lagging-strand ssDNA as the replication fork advances. Stimulates the activities of viral DNA polymerase and DnaB-like SF4 replicative helicase, probably via its interaction with the helicase assembly factor. Together with DnaB-like SF4 replicative helicase and the helicase assembly factor, promotes pairing of two homologous DNA molecules containing complementary single-stranded regions and mediates homologous DNA strand exchange. Also promotes the formation of joint molecules. mRNA specific autogenous translational repressor. The chain is Single-stranded DNA-binding protein from Escherichia coli (Bacteriophage T2).